We begin with the raw amino-acid sequence, 417 residues long: UDP-N-acetylglucosamine 1-carboxyvinyltransferase (417 aa).

22 to 23 (KN) is a phosphoenolpyruvate binding site. Residue R93 coordinates UDP-N-acetyl-alpha-D-glucosamine. The active-site Proton donor is the C117. C117 carries the post-translational modification 2-(S-cysteinyl)pyruvic acid O-phosphothioketal. UDP-N-acetyl-alpha-D-glucosamine contacts are provided by residues 122 to 126 (RPVDL), D305, and I327.

It belongs to the EPSP synthase family. MurA subfamily.

The protein resides in the cytoplasm. It carries out the reaction phosphoenolpyruvate + UDP-N-acetyl-alpha-D-glucosamine = UDP-N-acetyl-3-O-(1-carboxyvinyl)-alpha-D-glucosamine + phosphate. It participates in cell wall biogenesis; peptidoglycan biosynthesis. Functionally, cell wall formation. Adds enolpyruvyl to UDP-N-acetylglucosamine. The chain is UDP-N-acetylglucosamine 1-carboxyvinyltransferase from Thiobacillus denitrificans (strain ATCC 25259 / T1).